A 626-amino-acid polypeptide reads, in one-letter code: WD repeat-containing protein 76 (626 aa).

Disordered regions lie at residues 1-21 and 95-159; these read MSRSGAAAEKADSRQRPQMKV and PPKM…FSGL. Polar residues predominate over residues 99 to 123; the sequence is KNTSSKAESTLQNSSSAVHTESNKL. Residues 140–150 are compositionally biased toward acidic residues; it reads SSQDGDSDEDT. 7 WD repeats span residues 311–352, 358–400, 402–441, 446–485, 493–533, 535–565, and 590–626; these read VTTG…KEDG, PHSQ…EVYR, ERSSFSSFDFLAEDASTLIVGHWDGNMSLVDRRTPGTSYE, SSMGKIRTVHVHPVHRQYFITAGLRDTHIYDARRLNSRRS, EHTK…SKIP, LTTIRHNTFTGRWLTRFQAMWDPKQEDCVIV, and EYLVSVCSINAMHPTRYILAGGNSSGKIHVFMNEKSC.

It belongs to the WD repeat DDB2/WDR76 family. Interacts with CUL4A and/or CUL4B.

Specifically binds 5-hydroxymethylcytosine (5hmC), suggesting that it acts as a specific reader of 5hmC. This chain is WD repeat-containing protein 76 (WDR76), found in Homo sapiens (Human).